Here is a 910-residue protein sequence, read N- to C-terminus: Protein translocase subunit SecA (910 aa).

ATP contacts are provided by residues Gln86, 104–108 (GEGKT), and Asp499. Zn(2+)-binding residues include Cys894, Cys896, Cys905, and His906.

This sequence belongs to the SecA family. In terms of assembly, monomer and homodimer. Part of the essential Sec protein translocation apparatus which comprises SecA, SecYEG and auxiliary proteins SecDF-YajC and YidC. Zn(2+) is required as a cofactor.

Its subcellular location is the cell inner membrane. The protein resides in the cytoplasm. It carries out the reaction ATP + H2O + cellular proteinSide 1 = ADP + phosphate + cellular proteinSide 2.. Its function is as follows. Part of the Sec protein translocase complex. Interacts with the SecYEG preprotein conducting channel. Has a central role in coupling the hydrolysis of ATP to the transfer of proteins into and across the cell membrane, serving both as a receptor for the preprotein-SecB complex and as an ATP-driven molecular motor driving the stepwise translocation of polypeptide chains across the membrane. In Rickettsia bellii (strain OSU 85-389), this protein is Protein translocase subunit SecA.